A 269-amino-acid chain; its full sequence is MQAWVIGNWKQNPATSHDVNALLDDLCAAISTTKQMSHDNSARCQIMVAPSFIHLAAVNGRLKDTSILCAAQDVSGHSASVGAYTGDCSAQQIVDAGATWTILGHSERRQYHQESNDTLLQKMIHALSQDLGVVFCIGESQAQYDTKQTLEVIDNQLAVIKEFITQQPELIKALPTRLIIAYEPVWAIGTGKVPTVAEVSATHKHIKQILAGFADSLSNMTVLYGGSVNADNANSFAADPMIDGALVGGASLKADSFLTIATAFSQASI.

8 to 10 (NWK) contributes to the substrate binding site. Residue histidine 105 is the Electrophile of the active site. Glutamate 183 serves as the catalytic Proton acceptor. Residues glycine 189, serine 227, and 248 to 249 (GG) contribute to the substrate site.

It belongs to the triosephosphate isomerase family. Homodimer.

The protein localises to the cytoplasm. It carries out the reaction D-glyceraldehyde 3-phosphate = dihydroxyacetone phosphate. Its pathway is carbohydrate biosynthesis; gluconeogenesis. It functions in the pathway carbohydrate degradation; glycolysis; D-glyceraldehyde 3-phosphate from glycerone phosphate: step 1/1. Its function is as follows. Involved in the gluconeogenesis. Catalyzes stereospecifically the conversion of dihydroxyacetone phosphate (DHAP) to D-glyceraldehyde-3-phosphate (G3P). This chain is Triosephosphate isomerase, found in Psychrobacter cryohalolentis (strain ATCC BAA-1226 / DSM 17306 / VKM B-2378 / K5).